Reading from the N-terminus, the 464-residue chain is ATP synthase subunit beta (464 aa).

153-160 (GGAGVGKT) contributes to the ATP binding site.

Belongs to the ATPase alpha/beta chains family. In terms of assembly, F-type ATPases have 2 components, CF(1) - the catalytic core - and CF(0) - the membrane proton channel. CF(1) has five subunits: alpha(3), beta(3), gamma(1), delta(1), epsilon(1). CF(0) has three main subunits: a(1), b(2) and c(9-12). The alpha and beta chains form an alternating ring which encloses part of the gamma chain. CF(1) is attached to CF(0) by a central stalk formed by the gamma and epsilon chains, while a peripheral stalk is formed by the delta and b chains.

Its subcellular location is the cell inner membrane. The catalysed reaction is ATP + H2O + 4 H(+)(in) = ADP + phosphate + 5 H(+)(out). Its function is as follows. Produces ATP from ADP in the presence of a proton gradient across the membrane. The catalytic sites are hosted primarily by the beta subunits. This Burkholderia ambifaria (strain ATCC BAA-244 / DSM 16087 / CCUG 44356 / LMG 19182 / AMMD) (Burkholderia cepacia (strain AMMD)) protein is ATP synthase subunit beta.